The chain runs to 237 residues: (5-formylfuran-3-yl)methyl phosphate synthase (237 aa).

Catalysis depends on K27, which acts as the Schiff-base intermediate with substrate. The Proton acceptor role is filled by K85.

It belongs to the MfnB family.

The catalysed reaction is 2 D-glyceraldehyde 3-phosphate = 4-(hydroxymethyl)-2-furancarboxaldehyde phosphate + phosphate + 2 H2O. It functions in the pathway cofactor biosynthesis; methanofuran biosynthesis. Its function is as follows. Catalyzes the formation of 4-(hydroxymethyl)-2-furancarboxaldehyde phosphate (4-HFC-P) from two molecules of glyceraldehyde-3-P (GA-3-P). In Methanobrevibacter smithii (strain ATCC 35061 / DSM 861 / OCM 144 / PS), this protein is (5-formylfuran-3-yl)methyl phosphate synthase.